A 168-amino-acid chain; its full sequence is DNA-binding protein inhibitor ID-1 (168 aa).

Residues 46-98 form the bHLH domain; that stretch reads LPALLDEQQVNVLLYDMNGCYSRLKELVPTLPQNRKVSKVEILQHVIDYIRDL. Positions 53 to 106 are interaction with IFI204; that stretch reads QQVNVLLYDMNGCYSRLKELVPTLPQNRKVSKVEILQHVIDYIRDLQLELNSES. The Nuclear export signal signature appears at 91–104; it reads VIDYIRDLQLELNS.

In terms of assembly, heterodimer with other HLH proteins. Interacts with CLOCK and BMAL1. Interacts with COPS5, IFI204, GATA4 and NKX2-5. Polyubiquitinated; which is favored by Ifi204 and leads to proteasomal degradation.

The protein resides in the cytoplasm. It is found in the nucleus. Transcriptional regulator (lacking a basic DNA binding domain) which negatively regulates the basic helix-loop-helix (bHLH) transcription factors by forming heterodimers and inhibiting their DNA binding and transcriptional activity. Implicated in regulating a variety of cellular processes, including cellular growth, senescence, differentiation, apoptosis, angiogenesis, and neoplastic transformation. Inhibits skeletal muscle and cardiac myocyte differentiation. Regulates the circadian clock by repressing the transcriptional activator activity of the CLOCK-BMAL1 heterodimer. The polypeptide is DNA-binding protein inhibitor ID-1 (Id1) (Mus musculus (Mouse)).